The following is a 241-amino-acid chain: SURF1-like protein (241 aa).

2 helical membrane passes run 5-25 and 199-219; these read LTVL…LNRL and LEYA…YRIY.

Belongs to the SURF1 family.

It localises to the cell membrane. The protein is SURF1-like protein of Rickettsia bellii (strain RML369-C).